A 453-amino-acid chain; its full sequence is Growth/differentiation factor 9 (453 aa).

A signal peptide spans 1–27 (MALPNKFFLWFCCFAWLCFPISLDSLP). The propeptide occupies 28-318 (SRGEAQIVAR…EGVRSSRHRR (291 aa)). Residues asparagine 163, asparagine 236, asparagine 255, and asparagine 269 are each glycosylated (N-linked (GlcNAc...) asparagine). The interval 282 to 328 (LHPKRKPSQGPDQRRELSAYPVGEEAAEGVRSSRHRRDQESVSSELK) is disordered. Basic and acidic residues predominate over residues 318-328 (RDQESVSSELK). Asparagine 337 carries an N-linked (GlcNAc...) asparagine glycan. 3 disulfides stabilise this stretch: cysteine 352–cysteine 418, cysteine 381–cysteine 450, and cysteine 385–cysteine 452.

The protein belongs to the TGF-beta family. Homodimer or heterodimer (Potential). But, in contrast to other members of this family, cannot be disulfide-linked. Post-translationally, phosphorylated; phosphorylation is critical for GDF9 function.

The protein localises to the secreted. In terms of biological role, required for ovarian folliculogenesis. This is Growth/differentiation factor 9 (GDF9) from Capra hircus (Goat).